The following is a 202-amino-acid chain: Probable adenylyl-sulfate kinase (202 aa).

36–43 is a binding site for ATP; the sequence is GLSGSGKS. Ser-110 (phosphoserine intermediate) is an active-site residue.

Belongs to the APS kinase family.

It catalyses the reaction adenosine 5'-phosphosulfate + ATP = 3'-phosphoadenylyl sulfate + ADP + H(+). The protein operates within sulfur metabolism; hydrogen sulfide biosynthesis; sulfite from sulfate: step 2/3. Functionally, catalyzes the synthesis of activated sulfate. This chain is Probable adenylyl-sulfate kinase, found in Halalkalibacterium halodurans (strain ATCC BAA-125 / DSM 18197 / FERM 7344 / JCM 9153 / C-125) (Bacillus halodurans).